A 386-amino-acid polypeptide reads, in one-letter code: Vacuolar protein-sorting-associated protein 36 (386 aa).

The 88-residue stretch at 1–88 (MDRFVWTSGL…SAKIVVHLHP (88 aa)) folds into the GLUE N-terminal domain. Positions 105 to 138 (YIKLSFKEHGQIEFYRRLSEEMTQRRWETVPVSQ) constitute a GLUE C-terminal domain. A coiled-coil region spans residues 160-185 (ERKLEEKRKETDKNISEAFEDLSKLM).

The protein belongs to the VPS36 family. In terms of assembly, component of a complex at least composed of ELL, SNF8/EAP30, VPS25/EAP20 and VPS36/EAP45. Component of the endosomal sorting complex required for transport II (ESCRT-II), composed of SNF8, VPS36 and two copies of VPS25. Interacts with VPS25, SNF8, TSG101 and CHMP6. Interacts (via GLUE domain) with ubiquitin. Interacts with RILPL1 (via the C-terminal domain); which recruits ESCRT-II to the endosome membranes. Interacts with ECPAS.

It localises to the cytoplasm. The protein localises to the endosome. Its subcellular location is the late endosome. The protein resides in the membrane. It is found in the nucleus. Its function is as follows. Component of the ESCRT-II complex (endosomal sorting complex required for transport II), which is required for multivesicular body (MVB) formation and sorting of endosomal cargo proteins into MVBs. The MVB pathway mediates delivery of transmembrane proteins into the lumen of the lysosome for degradation. The ESCRT-II complex is probably involved in the recruitment of the ESCRT-III complex. Its ability to bind ubiquitin probably plays a role in endosomal sorting of ubiquitinated cargo proteins by ESCRT complexes. The ESCRT-II complex may also play a role in transcription regulation, possibly via its interaction with ELL. Binds phosphoinosides such as PtdIns(3,4,5)P3. In Rattus norvegicus (Rat), this protein is Vacuolar protein-sorting-associated protein 36 (Vps36).